Consider the following 595-residue polypeptide: Solute carrier family 13 member 1 (595 aa).

The next 5 helical transmembrane spans lie at 13–33, 41–61, 77–97, 108–128, and 131–151; these read FLFV…LHTK, LFVV…TALL, VASA…CLAT, IALK…LGFM, and TAFL…MPIA. 2 N-linked (GlcNAc...) asparagine glycosylation sites follow: Asn-174 and Asn-207. Transmembrane regions (helical) follow at residues 239-259, 290-310, 348-368, 381-401, 464-484, 491-511, 512-532, and 554-574; these read LTCL…ITGT, PAAL…FLGF, IVTL…DPGF, GFAT…LIPA, PLGS…VTSL, PATI…IHVN, PLYI…LPVA, and GLGV…TWIV. Asn-591 carries N-linked (GlcNAc...) asparagine glycosylation.

It belongs to the SLC13A/DASS transporter (TC 2.A.47) family. NADC subfamily. In terms of tissue distribution, highly expressed in kidney; not detectable in the other tissues tested.

It is found in the apical cell membrane. It catalyses the reaction sulfate(out) + 3 Na(+)(out) = sulfate(in) + 3 Na(+)(in). The enzyme catalyses selenate(out) + 3 Na(+)(out) = selenate(in) + 3 Na(+)(in). The catalysed reaction is thiosulfate(out) + 3 Na(+)(out) = thiosulfate(in) + 3 Na(+)(in). Its activity is regulated as follows. Inhibited by thiosulfate, selenate, molybdate, tungstate, citrate and succinate. Sodium:sulfate symporter that mediates sulfate reabsorption in the kidney and small intestine. Can also mediate the transport of selenate and thiosulfate. This Homo sapiens (Human) protein is Solute carrier family 13 member 1 (SLC13A1).